Reading from the N-terminus, the 83-residue chain is Small ribosomal subunit protein bS16 (83 aa).

Belongs to the bacterial ribosomal protein bS16 family.

The chain is Small ribosomal subunit protein bS16 from Albidiferax ferrireducens (strain ATCC BAA-621 / DSM 15236 / T118) (Rhodoferax ferrireducens).